The chain runs to 275 residues: Phosphonoacetaldehyde hydrolase (275 aa).

D15 acts as the Nucleophile in catalysis. Mg(2+) contacts are provided by D15 and A17. K56 acts as the Schiff-base intermediate with substrate in catalysis. Position 189 (D189) interacts with Mg(2+).

The protein belongs to the HAD-like hydrolase superfamily. PhnX family. In terms of assembly, homodimer. Mg(2+) is required as a cofactor.

The catalysed reaction is phosphonoacetaldehyde + H2O = acetaldehyde + phosphate + H(+). With respect to regulation, inhibited by phosphite, moderately inhibited by phosphonic acids, the corresponding aminophosphonic acids activate the enzyme. Involved in phosphonate degradation. This Pseudomonas aeruginosa (strain ATCC 15692 / DSM 22644 / CIP 104116 / JCM 14847 / LMG 12228 / 1C / PRS 101 / PAO1) protein is Phosphonoacetaldehyde hydrolase.